The primary structure comprises 436 residues: F-box/LRR-repeat protein At2g40920 (436 aa).

The F-box domain occupies 48 to 98; sequence EYLLQNFDLDHVMEILMRFPLTSLTRFKCVSKQWSSLISSRYFCNLLYTTV. LRR repeat units lie at residues 276 to 301 and 393 to 416; these read NCVV…IHLD and YYNL…WFDK.

This Arabidopsis thaliana (Mouse-ear cress) protein is F-box/LRR-repeat protein At2g40920.